The primary structure comprises 437 residues: 5-hydroxytryptamine receptor 3B (437 aa).

The N-terminal stretch at 1–21 (MILLWSCLLVAVVGILGTATP) is a signal peptide. Topologically, residues 22–235 (QPGNSSLHRL…RFNVVIRRCP (214 aa)) are extracellular. N-linked (GlcNAc...) asparagine glycosylation is found at Asn-25, Asn-92, and Asn-134. Cys-151 and Cys-165 are disulfide-bonded. The chain crosses the membrane as a helical span at residues 236–255 (LAYVVSLLIPSIFLMLVDLG). The Cytoplasmic segment spans residues 256–266 (SFYLPPNCRAR). A helical membrane pass occupies residues 267 to 284 (IVFKTNVLVGYTVFRVNM). The Extracellular portion of the chain corresponds to 285–295 (SDEVPRSAGCT). The chain crosses the membrane as a helical span at residues 296 to 324 (SLIGVFFTVCMALLVLSLSKSILLIKFLY). The Cytoplasmic portion of the chain corresponds to 325 to 410 (EERHSEQERP…WLAILCHFDQ (86 aa)). Residues 377–409 (FWFQLQSINNSLRTRDQVYQKEVEWLAILCHFD) form an HA-stretch; determines single-channel conductance in 5-HT3 receptors region. Residues 411-434 (LLFRIYLAVLGLYTVTLCSLWALW) form a helical membrane-spanning segment. Topologically, residues 435-437 (SRM) are extracellular.

It belongs to the ligand-gated ion channel (TC 1.A.9) family. 5-hydroxytryptamine receptor (TC 1.A.9.2) subfamily. HTR3B sub-subfamily. As to quaternary structure, forms homopentameric as well as heteropentameric serotonin-activated cation-selective channel complexes with HTR3A. The homomeric complex is not functional. Heteropentameric complexes display properties which resemble that of neuronal serotonin-activated channels in vivo. In terms of processing, N-glycosylation is required for membrane localization. As to expression, expressed in peripheral neurons, but not in neurons of the central nervous system.

It localises to the postsynaptic cell membrane. It is found in the cell membrane. It catalyses the reaction Na(+)(in) = Na(+)(out). It carries out the reaction K(+)(in) = K(+)(out). The enzyme catalyses Ca(2+)(in) = Ca(2+)(out). Its function is as follows. Forms serotonin (5-hydroxytryptamine/5-HT3)-activated cation-selective channel complexes, which when activated cause fast, depolarizing responses in neurons. This Rattus norvegicus (Rat) protein is 5-hydroxytryptamine receptor 3B.